A 347-amino-acid chain; its full sequence is Isopentenyl-diphosphate delta-isomerase (347 aa).

9 to 10 (RK) is a substrate binding site. Residues 65–67 (AMT), S95, and N124 each bind FMN. Residue 95–97 (STH) coordinates substrate. Q154 lines the substrate pocket. Residue E155 participates in Mg(2+) binding. FMN is bound by residues K186, S211, T216, 262–264 (GVR), and 283–284 (SR).

The protein belongs to the IPP isomerase type 2 family. In terms of assembly, homooctamer. Dimer of tetramers. Requires FMN as cofactor. NADPH is required as a cofactor. Mg(2+) serves as cofactor.

The protein resides in the cytoplasm. The catalysed reaction is isopentenyl diphosphate = dimethylallyl diphosphate. Functionally, involved in the biosynthesis of isoprenoids. Catalyzes the 1,3-allylic rearrangement of the homoallylic substrate isopentenyl (IPP) to its allylic isomer, dimethylallyl diphosphate (DMAPP). The polypeptide is Isopentenyl-diphosphate delta-isomerase (Staphylococcus saprophyticus subsp. saprophyticus (strain ATCC 15305 / DSM 20229 / NCIMB 8711 / NCTC 7292 / S-41)).